Consider the following 216-residue polypeptide: Large ribosomal subunit protein uL3 (216 aa).

Positions 132-155 (QDASHGNSRSHRVPGSIGQNQTPG) are disordered. The residue at position 152 (Gln152) is an N5-methylglutamine.

Belongs to the universal ribosomal protein uL3 family. Part of the 50S ribosomal subunit. Forms a cluster with proteins L14 and L19. Post-translationally, methylated by PrmB.

In terms of biological role, one of the primary rRNA binding proteins, it binds directly near the 3'-end of the 23S rRNA, where it nucleates assembly of the 50S subunit. This Legionella pneumophila (strain Paris) protein is Large ribosomal subunit protein uL3.